Reading from the N-terminus, the 114-residue chain is Small ribosomal subunit protein bS6 (114 aa).

Belongs to the bacterial ribosomal protein bS6 family.

Binds together with bS18 to 16S ribosomal RNA. The sequence is that of Small ribosomal subunit protein bS6 from Phocaeicola vulgatus (strain ATCC 8482 / DSM 1447 / JCM 5826 / CCUG 4940 / NBRC 14291 / NCTC 11154) (Bacteroides vulgatus).